A 259-amino-acid polypeptide reads, in one-letter code: Dihydroorotate dehydrogenase B (NAD(+)), electron transfer subunit (259 aa).

Residues 2 to 102 (MQKQNMIVVN…LGPLGHGFPV (101 aa)) enclose the FAD-binding FR-type domain. Residues 53–56 (RPIS), 70–72 (LYR), and 77–78 (GT) contribute to the FAD site. Cys221, Cys226, Cys229, and Cys246 together coordinate [2Fe-2S] cluster.

This sequence belongs to the PyrK family. Heterotetramer of 2 PyrK and 2 PyrD type B subunits. The cofactor is [2Fe-2S] cluster. FAD serves as cofactor.

The protein operates within pyrimidine metabolism; UMP biosynthesis via de novo pathway; orotate from (S)-dihydroorotate (NAD(+) route): step 1/1. In terms of biological role, responsible for channeling the electrons from the oxidation of dihydroorotate from the FMN redox center in the PyrD type B subunit to the ultimate electron acceptor NAD(+). This Bacillus cereus (strain 03BB102) protein is Dihydroorotate dehydrogenase B (NAD(+)), electron transfer subunit.